Consider the following 356-residue polypeptide: 11-beta-hydroxysteroid dehydrogenase (356 aa).

Residues 10 to 30 (LVVPPAGLLMLAFAWPSLAFF) form a helical; Signal-anchor for type II membrane protein membrane-spanning segment. The Proline-knob motif lies at 13 to 26 (PPAGLLMLAFAWPS). 54 to 85 (GASSGIGEQIAYQYAKRRANLVLVARREHRLR) lines the NADP(+) pocket. Ser184 provides a ligand contact to substrate. Catalysis depends on Tyr197, which acts as the Proton acceptor. NADP(+)-binding positions include 197–201 (YNAAK) and Lys201.

This sequence belongs to the short-chain dehydrogenases/reductases (SDR) family. Expressed in megagametophytes (at protein level).

The protein resides in the lipid droplet. The protein localises to the membrane. It carries out the reaction an 11beta-hydroxysteroid + NADP(+) = an 11-oxosteroid + NADPH + H(+). The catalysed reaction is corticosterone + NADP(+) = 11-dehydrocorticosterone + NADPH + H(+). It catalyses the reaction 17beta-estradiol + NADP(+) = estrone + NADPH + H(+). In terms of biological role, has dehydrogenase activity against corticosterone (11 beta-hydroxysteroid) and estradiol (17 beta-hydroxysteroid) in the presence of NADP(+). May be involved in signal transduction regulated by various sterols. This Pinus massoniana (Chinese red pine) protein is 11-beta-hydroxysteroid dehydrogenase.